Consider the following 533-residue polypeptide: Amidophosphoribosyltransferase (533 aa).

The Nucleophile role is filled by Cys2. Residues 2-238 (CGILALMLAD…PGECVFIRRS (237 aa)) enclose the Glutamine amidotransferase type-2 domain. 2 residues coordinate Mg(2+): Asp383 and Asp384. Ser506 carries the phosphoserine modification.

It in the C-terminal section; belongs to the purine/pyrimidine phosphoribosyltransferase family. Mg(2+) serves as cofactor.

The catalysed reaction is 5-phospho-beta-D-ribosylamine + L-glutamate + diphosphate = 5-phospho-alpha-D-ribose 1-diphosphate + L-glutamine + H2O. It functions in the pathway purine metabolism; IMP biosynthesis via de novo pathway; N(1)-(5-phospho-D-ribosyl)glycinamide from 5-phospho-alpha-D-ribose 1-diphosphate: step 1/2. This chain is Amidophosphoribosyltransferase (ade4), found in Schizosaccharomyces pombe (strain 972 / ATCC 24843) (Fission yeast).